We begin with the raw amino-acid sequence, 253 residues long: uncharacterized protein (253 aa).

The first 19 residues, 1-19 (MHYLKKVTIYISLLILVSG), serve as a signal peptide directing secretion. The N-palmitoyl cysteine moiety is linked to residue Cys20. Cys20 carries the S-diacylglycerol cysteine lipid modification.

The protein belongs to the staphylococcal tandem lipoprotein family.

Its subcellular location is the cell membrane. This is an uncharacterized protein from Staphylococcus epidermidis (strain ATCC 35984 / DSM 28319 / BCRC 17069 / CCUG 31568 / BM 3577 / RP62A).